The chain runs to 412 residues: 2,3-bisphosphoglycerate-independent phosphoglycerate mutase (412 aa).

Belongs to the BPG-independent phosphoglycerate mutase family. A-PGAM subfamily.

The enzyme catalyses (2R)-2-phosphoglycerate = (2R)-3-phosphoglycerate. Its pathway is carbohydrate degradation; glycolysis; pyruvate from D-glyceraldehyde 3-phosphate: step 3/5. Functionally, catalyzes the interconversion of 2-phosphoglycerate and 3-phosphoglycerate. This Methanobrevibacter smithii (strain ATCC 35061 / DSM 861 / OCM 144 / PS) protein is 2,3-bisphosphoglycerate-independent phosphoglycerate mutase.